The chain runs to 268 residues: UPF0328 protein ECU03_0040 (268 aa).

It belongs to the UPF0328 family.

This Encephalitozoon cuniculi (strain GB-M1) (Microsporidian parasite) protein is UPF0328 protein ECU03_0040.